A 314-amino-acid chain; its full sequence is tRNA dimethylallyltransferase (314 aa).

12 to 19 is a binding site for ATP; sequence GPTASGKT. Residue 14 to 19 participates in substrate binding; the sequence is TASGKT. Interaction with substrate tRNA regions lie at residues 37–40, 161–165, 242–247, and 275–282; these read DSAL, QRINR, RCVGYR, and KRQITWLR.

It belongs to the IPP transferase family. In terms of assembly, monomer. It depends on Mg(2+) as a cofactor.

It carries out the reaction adenosine(37) in tRNA + dimethylallyl diphosphate = N(6)-dimethylallyladenosine(37) in tRNA + diphosphate. Catalyzes the transfer of a dimethylallyl group onto the adenine at position 37 in tRNAs that read codons beginning with uridine, leading to the formation of N6-(dimethylallyl)adenosine (i(6)A). This Mannheimia succiniciproducens (strain KCTC 0769BP / MBEL55E) protein is tRNA dimethylallyltransferase.